The chain runs to 132 residues: Hemoglobin subunit beta-1 (132 aa).

The region spanning 1–132 is the Globin domain; the sequence is WSKIDIDVCG…VVSALGRQYH (132 aa). Residues H49 and H78 each coordinate heme b.

It belongs to the globin family. As to quaternary structure, hb 1 is a heterotetramer of two alpha-1 and two beta-1 chains. Hb 2 is a heterotetramer of two alpha-2 and two beta-1 chains. In terms of tissue distribution, red blood cells.

Functionally, involved in oxygen transport from gills to the various peripheral tissues. The sequence is that of Hemoglobin subunit beta-1 (hbb1) from Arctogadus glacialis (Arctic cod).